The chain runs to 246 residues: Probable transcriptional regulatory protein APP7_1210 (246 aa).

The protein belongs to the TACO1 family.

It is found in the cytoplasm. This is Probable transcriptional regulatory protein APP7_1210 from Actinobacillus pleuropneumoniae serotype 7 (strain AP76).